Here is a 334-residue protein sequence, read N- to C-terminus: Serine/Arginine-related protein 53 (334 aa).

A compositionally biased stretch (basic and acidic residues) spans 1–13 (MGRRSSDTEEESR). Disordered regions lie at residues 1 to 179 (MGRR…HLPP), 201 to 220 (LKAK…EDQA), and 243 to 290 (QTFR…SIPT). 2 stretches are compositionally biased toward basic residues: residues 14-24 (SKRKKKHRRRS) and 35-50 (YSRK…KSRS). Positions 51-62 (WSRDLQPRSHSY) are enriched in basic and acidic residues. A compositionally biased stretch (basic residues) spans 78–118 (SRRKRSRSRSRGRGKSYRVQRSRSKSRTRRSRSRPRLRSHS). Basic and acidic residues-rich tracts occupy residues 132–166 (RSRD…KRGE), 201–218 (LKAK…KEED), and 247–259 (SSKE…EPSE). A coiled-coil region spans residues 180-236 (AEQAKARLQLVLEAAAKADEALKAKERNEEEAKRRKEEDQATLVEQVKRVKEIEAIE).

Interacts (via Arg/Ser-rich domain) with LUC7L3, RBM39 and RSF1. In terms of processing, phosphorylated. In terms of tissue distribution, widely expressed. Expressed in brain, spinal cord, cerebellum.

The protein resides in the nucleus. Its subcellular location is the nucleus speckle. It localises to the cytoplasm. Functionally, has a role in alternative splicing and transcription regulation. Involved in both constitutive and alternative pre-mRNA splicing. May have a role in the recognition of the 3' splice site during the second step of splicing. The protein is Serine/Arginine-related protein 53 (RSRC1) of Homo sapiens (Human).